A 527-amino-acid chain; its full sequence is GMP synthase [glutamine-hydrolyzing] (527 aa).

The 189-residue stretch at 20–208 (SVVILDYGSQ…LFDVCGCAPT (189 aa)) folds into the Glutamine amidotransferase type-1 domain. The Nucleophile role is filled by Cys-97. Active-site residues include His-182 and Glu-184. In terms of domain architecture, GMPS ATP-PPase spans 209–402 (WTAESFVEQA…LGLPEEIVQR (194 aa)). Residue 236–242 (SGGVDSS) participates in ATP binding.

In terms of assembly, homodimer.

The enzyme catalyses XMP + L-glutamine + ATP + H2O = GMP + L-glutamate + AMP + diphosphate + 2 H(+). It participates in purine metabolism; GMP biosynthesis; GMP from XMP (L-Gln route): step 1/1. In terms of biological role, catalyzes the synthesis of GMP from XMP. The chain is GMP synthase [glutamine-hydrolyzing] from Thermomicrobium roseum (strain ATCC 27502 / DSM 5159 / P-2).